Consider the following 141-residue polypeptide: MSENVMTLQVITPAGVVYDHHANYITARTTNGEIGILPNMISTIAGLEIDELKVRRPDDETHVDYIAVNGGIIEIKDSLVTIVADSAERNRDIDVSRAERAKIRAEKALEVAKAEKKSDEIKRVEVALHRALNRLNVSSHN.

This sequence belongs to the ATPase epsilon chain family. F-type ATPases have 2 components, CF(1) - the catalytic core - and CF(0) - the membrane proton channel. CF(1) has five subunits: alpha(3), beta(3), gamma(1), delta(1), epsilon(1). CF(0) has three main subunits: a, b and c.

Its subcellular location is the cell membrane. Functionally, produces ATP from ADP in the presence of a proton gradient across the membrane. The protein is ATP synthase epsilon chain of Lactococcus lactis subsp. cremoris (strain SK11).